A 315-amino-acid chain; its full sequence is Neuroguidin (315 aa).

Position 2 is an N-acetylalanine (alanine 2). Residues 13-41 are a coiled coil; that stretch reads SAVTLLKNLQEQVMAVTAQVKSLTQKVQA. The interval 41–174 is necessary for interaction with EIF4E; that stretch reads AGAYPTEKGL…KGVSKKYVPP (134 aa). Phosphoserine is present on residues serine 121, serine 142, and serine 143. The tract at residues 124–169 is disordered; sequence ENDPLRFKPHPSNMMSKLSSEDEEEDEAEDDQSEASGKKSVKGVSK. Residues 144-156 are compositionally biased toward acidic residues; sequence EDEEEDEAEDDQS. Residues 181–205 are a coiled coil; that stretch reads YDETEAEREKKRLERAKRRALSSSV. Residues serine 204 and serine 214 each carry the phosphoserine modification. The tract at residues 277–315 is disordered; sequence DISALTGGTVHLDEDQNPIKKRKKIPQKGRKKKGFRRRR. Residues 295-315 show a composition bias toward basic residues; the sequence is IKKRKKIPQKGRKKKGFRRRR.

This sequence belongs to the SAS10 family. Part of the small subunit (SSU) processome, composed of more than 70 proteins and the RNA chaperone small nucleolar RNA (snoRNA) U3. Interacts with CPEB1 and EIF4E.

It is found in the nucleus. Its subcellular location is the nucleolus. The protein localises to the chromosome. The protein resides in the centromere. It localises to the cytoplasm. It is found in the cell projection. Its subcellular location is the axon. The protein localises to the dendrite. The protein resides in the filopodium. Its function is as follows. Part of the small subunit (SSU) processome, first precursor of the small eukaryotic ribosomal subunit. During the assembly of the SSU processome in the nucleolus, many ribosome biogenesis factors, an RNA chaperone and ribosomal proteins associate with the nascent pre-rRNA and work in concert to generate RNA folding, modifications, rearrangements and cleavage as well as targeted degradation of pre-ribosomal RNA by the RNA exosome. Its dissociation from the complex determines the transition from state pre-A1 to state pre-A1*. Inhibits mRNA translation in a cytoplasmic polyadenylation element (CPE)-dependent manner. The sequence is that of Neuroguidin from Homo sapiens (Human).